Reading from the N-terminus, the 712-residue chain is Secretin OutD (712 aa).

The N-terminal stretch at 1 to 27 (MLGKGIKKSWGWLGLTVLLLGSPCGWA) is a signal peptide. Residues 28-124 (AEFSASFKGT…LANNEQPGVG (97 aa)) form an N0 region. Residues 126–190 (ELVTRVVPLN…DIVNTVDKTG (65 aa)) are N1. The interval 191–264 (DREMITVSLN…MIRQLDRKQV (74 aa)) is N2. The interval 267 to 394 (GGTKVIYLKY…DLEQVINQLD (128 aa)) is N3. The tract at residues 288–342 (GNGTSGNRNSSSTNSSRPSSTRSSSTLNNSNSSSSGSSSGSGSSSSSSSSSMGFG) is disordered. Residues 399–651 (QVLVEAIIAE…LFLRPTIIRD (253 aa)) form a secretin region. Positions 653–712 (QQYQQASISKYNSFNNEQQQQRGQGNSVLDNNTLRLSGGNTYTFRQVQSSISAFYQPEGR) are s domain.

The protein belongs to the bacterial secretin family. GSP D subfamily. Forms a cylindrical channel with 15 subunits.

Its subcellular location is the cell outer membrane. Involved in a type II secretion system (T2SS, formerly general secretion pathway, GSP) for the export of proteins. Required for the translocation of the multiple pectic enzymes. This subunit forms the outer membrane channel. This is Secretin OutD (outD) from Dickeya chrysanthemi (Pectobacterium chrysanthemi).